Reading from the N-terminus, the 189-residue chain is Glucose-6-phosphate isomerase (189 aa).

Residues H88, H90, E97, and H136 each contribute to the Fe cation site.

The protein belongs to the archaeal-type GPI family. Homodimer.

The protein localises to the cytoplasm. The catalysed reaction is alpha-D-glucose 6-phosphate = beta-D-fructose 6-phosphate. The protein operates within carbohydrate degradation; glycolysis; D-glyceraldehyde 3-phosphate and glycerone phosphate from D-glucose: step 2/4. The polypeptide is Glucose-6-phosphate isomerase (Thermococcus kodakarensis (strain ATCC BAA-918 / JCM 12380 / KOD1) (Pyrococcus kodakaraensis (strain KOD1))).